Here is a 284-residue protein sequence, read N- to C-terminus: Serine/threonine-protein phosphatase Pgam5, mitochondrial (284 aa).

A helical membrane pass occupies residues leucine 8 to aspartate 24.

Belongs to the phosphoglycerate mutase family. BPG-dependent PGAM subfamily. Interacts with skn-1 isoforms a and c.

It localises to the mitochondrion outer membrane. The catalysed reaction is O-phospho-L-seryl-[protein] + H2O = L-seryl-[protein] + phosphate. It catalyses the reaction O-phospho-L-threonyl-[protein] + H2O = L-threonyl-[protein] + phosphate. Functionally, displays phosphatase activity for serine/threonine residues. Has apparently no phosphoglycerate mutase activity. This is Serine/threonine-protein phosphatase Pgam5, mitochondrial (pgam-5) from Caenorhabditis elegans.